Here is a 415-residue protein sequence, read N- to C-terminus: Gamma-glutamyl phosphate reductase (415 aa).

The protein belongs to the gamma-glutamyl phosphate reductase family.

The protein resides in the cytoplasm. It carries out the reaction L-glutamate 5-semialdehyde + phosphate + NADP(+) = L-glutamyl 5-phosphate + NADPH + H(+). Its pathway is amino-acid biosynthesis; L-proline biosynthesis; L-glutamate 5-semialdehyde from L-glutamate: step 2/2. In terms of biological role, catalyzes the NADPH-dependent reduction of L-glutamate 5-phosphate into L-glutamate 5-semialdehyde and phosphate. The product spontaneously undergoes cyclization to form 1-pyrroline-5-carboxylate. The sequence is that of Gamma-glutamyl phosphate reductase from Cutibacterium acnes (strain DSM 16379 / KPA171202) (Propionibacterium acnes).